Here is a 399-residue protein sequence, read N- to C-terminus: Coenzyme A biosynthesis bifunctional protein CoaBC (399 aa).

Positions 1 to 190 (MQTLAGKKIL…FQPKVLEGKS (190 aa)) are phosphopantothenoylcysteine decarboxylase. Cys159 functions as the Proton donor in the catalytic mechanism. A phosphopantothenate--cysteine ligase region spans residues 191-399 (ILISAGPTRE…KILEKMRELM (209 aa)). CTP contacts are provided by residues Asp279, Lys289, 307–310 (PDIV), Phe326, Lys340, and Lys344.

It in the N-terminal section; belongs to the HFCD (homo-oligomeric flavin containing Cys decarboxylase) superfamily. The protein in the C-terminal section; belongs to the PPC synthetase family. The cofactor is Mg(2+). It depends on FMN as a cofactor.

It carries out the reaction N-[(R)-4-phosphopantothenoyl]-L-cysteine + H(+) = (R)-4'-phosphopantetheine + CO2. The enzyme catalyses (R)-4'-phosphopantothenate + L-cysteine + CTP = N-[(R)-4-phosphopantothenoyl]-L-cysteine + CMP + diphosphate + H(+). The protein operates within cofactor biosynthesis; coenzyme A biosynthesis; CoA from (R)-pantothenate: step 2/5. It participates in cofactor biosynthesis; coenzyme A biosynthesis; CoA from (R)-pantothenate: step 3/5. Functionally, catalyzes two sequential steps in the biosynthesis of coenzyme A. In the first step cysteine is conjugated to 4'-phosphopantothenate to form 4-phosphopantothenoylcysteine. In the second step the latter compound is decarboxylated to form 4'-phosphopantotheine. The protein is Coenzyme A biosynthesis bifunctional protein CoaBC of Vibrio parahaemolyticus serotype O3:K6 (strain RIMD 2210633).